Here is a 161-residue protein sequence, read N- to C-terminus: NADH-quinone oxidoreductase subunit I (161 aa).

2 consecutive 4Fe-4S ferredoxin-type domains span residues 52-82 and 92-121; these read LRRY…IESE and KRYD…ETRV. 8 residues coordinate [4Fe-4S] cluster: Cys-62, Cys-65, Cys-68, Cys-72, Cys-101, Cys-104, Cys-107, and Cys-111.

It belongs to the complex I 23 kDa subunit family. As to quaternary structure, NDH-1 is composed of 14 different subunits. Subunits NuoA, H, J, K, L, M, N constitute the membrane sector of the complex. [4Fe-4S] cluster serves as cofactor.

It localises to the cell inner membrane. The catalysed reaction is a quinone + NADH + 5 H(+)(in) = a quinol + NAD(+) + 4 H(+)(out). NDH-1 shuttles electrons from NADH, via FMN and iron-sulfur (Fe-S) centers, to quinones in the respiratory chain. The immediate electron acceptor for the enzyme in this species is believed to be ubiquinone. Couples the redox reaction to proton translocation (for every two electrons transferred, four hydrogen ions are translocated across the cytoplasmic membrane), and thus conserves the redox energy in a proton gradient. The chain is NADH-quinone oxidoreductase subunit I from Aromatoleum aromaticum (strain DSM 19018 / LMG 30748 / EbN1) (Azoarcus sp. (strain EbN1)).